A 264-amino-acid polypeptide reads, in one-letter code: Acyl-[acyl-carrier-protein]--UDP-N-acetylglucosamine O-acyltransferase (264 aa).

Belongs to the transferase hexapeptide repeat family. LpxA subfamily. In terms of assembly, homotrimer.

The protein localises to the cytoplasm. It carries out the reaction a (3R)-hydroxyacyl-[ACP] + UDP-N-acetyl-alpha-D-glucosamine = a UDP-3-O-[(3R)-3-hydroxyacyl]-N-acetyl-alpha-D-glucosamine + holo-[ACP]. Its pathway is glycolipid biosynthesis; lipid IV(A) biosynthesis; lipid IV(A) from (3R)-3-hydroxytetradecanoyl-[acyl-carrier-protein] and UDP-N-acetyl-alpha-D-glucosamine: step 1/6. Involved in the biosynthesis of lipid A, a phosphorylated glycolipid that anchors the lipopolysaccharide to the outer membrane of the cell. In Rickettsia canadensis (strain McKiel), this protein is Acyl-[acyl-carrier-protein]--UDP-N-acetylglucosamine O-acyltransferase.